Reading from the N-terminus, the 137-residue chain is Competence protein ComGG (137 aa).

A helical membrane pass occupies residues 10 to 30 (GVLLYAVTIAAIFSLLLQFYL). Residues 106–137 (EKRDKKEEVATDSSEKVEKKKSEEKPEKKENS) are disordered.

The transformation pili are flexible filaments, consisting mainly of the major pilin ComGC and smaller amounts of the minor pilins, including at least ComGD, ComGF and ComGG, and perhaps ComGE. Interacts with ComGC; the interaction is probably direct. Interacts with ComGD. Interacts with ComGE. Interacts with ComGF. May act as a link between ComGC, ComGD and ComGF.

The protein resides in the fimbrium. It is found in the cell membrane. Functionally, required for formation of the type IV-like pilus (T4P) that plays a role in transformation. Transformation pili are dynamically extended and retracted, perhaps thereby promoting DNA uptake and transformation. Required for transformation. The protein is Competence protein ComGG of Streptococcus pneumoniae (strain ATCC BAA-255 / R6).